We begin with the raw amino-acid sequence, 315 residues long: Archaeosortase A (315 aa).

The next 7 helical transmembrane spans lie at 12-32 (VIPY…AGVA), 47-67 (AGAW…FAFV), 74-94 (TVLI…VFAG), 173-193 (VVFE…IAAV), 204-224 (IALS…FIAL), 227-247 (GYQW…FGLT), and 260-280 (VLAQ…IARW). The active-site Acyl-thioester intermediate is the cysteine 177. Residue arginine 218 is the Proton donor of the active site.

The protein belongs to the exosortase/archaeosortase family. Archaeosortase A subfamily.

It localises to the cell membrane. Transpeptidase that recognizes and modifies its substrate by proteolytic cleavage of a sorting signal. Following cleavage, a covalent intermediate is formed via a thioester bond between the archaeosortase and its substrate, which is then transferred and covalently attached to the cell membrane. The sequence is that of Archaeosortase A from Natronomonas pharaonis (strain ATCC 35678 / DSM 2160 / CIP 103997 / JCM 8858 / NBRC 14720 / NCIMB 2260 / Gabara) (Halobacterium pharaonis).